The primary structure comprises 217 residues: Probable GTP-binding protein EngB (217 aa).

Positions 31–205 (VGVEIAFAGR…LAILDAWCHP (175 aa)) constitute an EngB-type G domain. Residues 39 to 46 (GRSNAGKS), 66 to 70 (GRTQL), 84 to 87 (DLPG), 151 to 154 (TKAD), and 184 to 186 (FSA) contribute to the GTP site. Ser46 and Thr68 together coordinate Mg(2+).

It belongs to the TRAFAC class TrmE-Era-EngA-EngB-Septin-like GTPase superfamily. EngB GTPase family. Requires Mg(2+) as cofactor.

In terms of biological role, necessary for normal cell division and for the maintenance of normal septation. The polypeptide is Probable GTP-binding protein EngB (Shewanella amazonensis (strain ATCC BAA-1098 / SB2B)).